The primary structure comprises 412 residues: Subtilisin-like protease 6 (412 aa).

Positions 1–20 are cleaved as a signal peptide; the sequence is MGFITKAIPIVLAALSTVNG. A propeptide spanning residues 21–126 is cleaved from the precursor; it reads ARILEAGPHA…VVRTTTNGTN (106 aa). Residues 36–120 enclose the Inhibitor I9 domain; that stretch reads KYIVVMKREV…FIEPDFVVRT (85 aa). N-linked (GlcNAc...) asparagine glycosylation is found at Asn123 and Asn126. Residues 135 to 412 enclose the Peptidase S8 domain; the sequence is SWGLARVGSK…GKLIYNGSGK (278 aa). Active-site charge relay system residues include Asp167 and His198. Asn252 and Asn264 each carry an N-linked (GlcNAc...) asparagine glycan. Ser358 acts as the Charge relay system in catalysis. Residue Asn408 is glycosylated (N-linked (GlcNAc...) asparagine).

The protein belongs to the peptidase S8 family.

Its subcellular location is the secreted. Secreted subtilisin-like serine protease with keratinolytic activity that contributes to pathogenicity. This Trichophyton rubrum (Athlete's foot fungus) protein is Subtilisin-like protease 6 (SUB6).